The following is a 1406-amino-acid chain: DNA-directed RNA polymerase subunit beta' (1406 aa).

The Zn(2+) site is built by cysteine 70, cysteine 72, cysteine 85, and cysteine 88. Residues aspartate 460, aspartate 462, and aspartate 464 each coordinate Mg(2+). 4 residues coordinate Zn(2+): cysteine 814, cysteine 888, cysteine 895, and cysteine 898.

The protein belongs to the RNA polymerase beta' chain family. As to quaternary structure, the RNAP catalytic core consists of 2 alpha, 1 beta, 1 beta' and 1 omega subunit. When a sigma factor is associated with the core the holoenzyme is formed, which can initiate transcription. Requires Mg(2+) as cofactor. Zn(2+) serves as cofactor.

The catalysed reaction is RNA(n) + a ribonucleoside 5'-triphosphate = RNA(n+1) + diphosphate. Functionally, DNA-dependent RNA polymerase catalyzes the transcription of DNA into RNA using the four ribonucleoside triphosphates as substrates. This is DNA-directed RNA polymerase subunit beta' from Colwellia psychrerythraea (strain 34H / ATCC BAA-681) (Vibrio psychroerythus).